Here is a 403-residue protein sequence, read N- to C-terminus: D-galactonate dehydratase family member ManD (403 aa).

Substrate-binding residues include N37 and H122. Y159 acts as the Proton donor/acceptor in catalysis. Position 211 (D211) interacts with Mg(2+). Catalysis depends on H213, which acts as the Proton donor/acceptor. Mg(2+) contacts are provided by E237 and E263. Residues E263, R284, H313, D317, and E340 each contribute to the substrate site.

It belongs to the mandelate racemase/muconate lactonizing enzyme family. GalD subfamily. Mg(2+) serves as cofactor.

The enzyme catalyses D-mannonate = 2-dehydro-3-deoxy-D-gluconate + H2O. The catalysed reaction is D-gluconate = 2-dehydro-3-deoxy-D-gluconate + H2O. Functionally, has low dehydratase activity with D-mannonate and D-gluconate, suggesting that these are not physiological substrates and that it has no significant role in the in vivo degradation of these compounds. Has no detectable activity with a panel of 70 other acid sugars (in vitro). This Chromohalobacter salexigens (strain ATCC BAA-138 / DSM 3043 / CIP 106854 / NCIMB 13768 / 1H11) protein is D-galactonate dehydratase family member ManD (manD).